The chain runs to 329 residues: Acetyl-coenzyme A carboxylase carboxyl transferase subunit alpha (329 aa).

A CoA carboxyltransferase C-terminal domain is found at 40 to 294 (QLETLAARRR…KTSILRHLTE (255 aa)).

Belongs to the AccA family. As to quaternary structure, acetyl-CoA carboxylase is a heterohexamer composed of biotin carboxyl carrier protein (AccB), biotin carboxylase (AccC) and two subunits each of ACCase subunit alpha (AccA) and ACCase subunit beta (AccD).

It localises to the cytoplasm. The enzyme catalyses N(6)-carboxybiotinyl-L-lysyl-[protein] + acetyl-CoA = N(6)-biotinyl-L-lysyl-[protein] + malonyl-CoA. It functions in the pathway lipid metabolism; malonyl-CoA biosynthesis; malonyl-CoA from acetyl-CoA: step 1/1. Component of the acetyl coenzyme A carboxylase (ACC) complex. First, biotin carboxylase catalyzes the carboxylation of biotin on its carrier protein (BCCP) and then the CO(2) group is transferred by the carboxyltransferase to acetyl-CoA to form malonyl-CoA. The polypeptide is Acetyl-coenzyme A carboxylase carboxyl transferase subunit alpha (Prochlorococcus marinus (strain SARG / CCMP1375 / SS120)).